We begin with the raw amino-acid sequence, 224 residues long: uncharacterized protein (224 aa).

4 consecutive transmembrane segments (helical) span residues alanine 25–isoleucine 45, valine 56–proline 76, glutamate 107–valine 127, and isoleucine 149–phenylalanine 169.

Its subcellular location is the cell membrane. This is an uncharacterized protein from Mycoplasma pneumoniae (strain ATCC 29342 / M129 / Subtype 1) (Mycoplasmoides pneumoniae).